A 668-amino-acid chain; its full sequence is DNA ligase (668 aa).

NAD(+)-binding positions include 34 to 38, 83 to 84, and E114; these read DTEYD and SL. The active-site N6-AMP-lysine intermediate is the K116. 4 residues coordinate NAD(+): R137, E171, K286, and K310. Zn(2+) contacts are provided by C404, C407, C422, and C427. The BRCT domain occupies 588 to 668; sequence NSDSIIANKS…FFDLLKSEKG (81 aa).

This sequence belongs to the NAD-dependent DNA ligase family. LigA subfamily. Mg(2+) is required as a cofactor. Requires Mn(2+) as cofactor.

It catalyses the reaction NAD(+) + (deoxyribonucleotide)n-3'-hydroxyl + 5'-phospho-(deoxyribonucleotide)m = (deoxyribonucleotide)n+m + AMP + beta-nicotinamide D-nucleotide.. Functionally, DNA ligase that catalyzes the formation of phosphodiester linkages between 5'-phosphoryl and 3'-hydroxyl groups in double-stranded DNA using NAD as a coenzyme and as the energy source for the reaction. It is essential for DNA replication and repair of damaged DNA. This chain is DNA ligase, found in Mycoplasma mycoides subsp. mycoides SC (strain CCUG 32753 / NCTC 10114 / PG1).